A 668-amino-acid chain; its full sequence is mRNA cap guanine-N(7) methyltransferase (668 aa).

The span at 1-19 (MYDPARDSWEERDGDEARS) shows a compositional bias: basic and acidic residues. Positions 1 to 281 (MYDPARDSWE…RAQVEEAMRA (281 aa)) are disordered. A compositionally biased stretch (polar residues) spans 44 to 65 (GENNNTTDLQQHPDPSSKTTAS). Positions 73-88 (SQPAQPTTQTPPSVST) are enriched in low complexity. Residues 100–129 (KASNPQSLTSTAQNQLNKSNTTMENTSGSA) show a composition bias toward polar residues. Basic and acidic residues predominate over residues 133 to 142 (PRADPSDKPN). Residues 148 to 157 (ASPTDQNGSQ) show a composition bias toward polar residues. Residues 257-279 (LVDRETLRRRQEERERAQVEEAM) are compositionally biased toward basic and acidic residues. One can recognise an mRNA cap 0 methyltransferase domain in the interval 310–668 (SKIKGLRSFN…FYHAFCFYKV (359 aa)). Residue 319-320 (NN) coordinates mRNA. S-adenosyl-L-methionine contacts are provided by residues Lys323, Gly366, Asp390, Asp428, 471-473 (MFT), and Tyr476. Positions 524-547 (ARQAQAKKEKSDEAPEDGEVEEDD) are disordered. The span at 537–547 (APEDGEVEEDD) shows a compositional bias: acidic residues.

Belongs to the class I-like SAM-binding methyltransferase superfamily. mRNA cap 0 methyltransferase family.

It localises to the nucleus. It catalyses the reaction a 5'-end (5'-triphosphoguanosine)-ribonucleoside in mRNA + S-adenosyl-L-methionine = a 5'-end (N(7)-methyl 5'-triphosphoguanosine)-ribonucleoside in mRNA + S-adenosyl-L-homocysteine. In terms of biological role, responsible for methylating the 5'-cap structure of mRNAs. In Aspergillus fumigatus (strain ATCC MYA-4609 / CBS 101355 / FGSC A1100 / Af293) (Neosartorya fumigata), this protein is mRNA cap guanine-N(7) methyltransferase (abd1).